A 235-amino-acid polypeptide reads, in one-letter code: Lipoprotein-releasing system ATP-binding protein LolD (235 aa).

The ABC transporter domain maps to 13–235 (LCCSNIIKRY…SNGMLKISTI (223 aa)). 49 to 56 (GASGSGKS) provides a ligand contact to ATP.

Belongs to the ABC transporter superfamily. Lipoprotein translocase (TC 3.A.1.125) family. As to quaternary structure, the complex is composed of two ATP-binding proteins (LolD) and two transmembrane proteins (LolC and LolE).

It is found in the cell inner membrane. In terms of biological role, part of the ABC transporter complex LolCDE involved in the translocation of mature outer membrane-directed lipoproteins, from the inner membrane to the periplasmic chaperone, LolA. Responsible for the formation of the LolA-lipoprotein complex in an ATP-dependent manner. The sequence is that of Lipoprotein-releasing system ATP-binding protein LolD from Blochmanniella floridana.